The following is a 252-amino-acid chain: Chitooligosaccharide deacetylase (252 aa).

Positions 61 and 125 each coordinate Mg(2+).

This sequence belongs to the YdjC deacetylase family. ChbG subfamily. Homodimer. It depends on Mg(2+) as a cofactor.

It localises to the cytoplasm. It carries out the reaction N,N'-diacetylchitobiose + H2O = N-acetyl-beta-D-glucosaminyl-(1-&gt;4)-D-glucosamine + acetate. The catalysed reaction is diacetylchitobiose-6'-phosphate + H2O = N'-monoacetylchitobiose-6'-phosphate + acetate. The protein operates within glycan degradation; chitin degradation. Its function is as follows. Involved in the degradation of chitin. ChbG is essential for growth on the acetylated chitooligosaccharides chitobiose and chitotriose but is dispensable for growth on cellobiose and chitosan dimer, the deacetylated form of chitobiose. Deacetylation of chitobiose-6-P and chitotriose-6-P is necessary for both the activation of the chb promoter by the regulatory protein ChbR and the hydrolysis of phosphorylated beta-glucosides by the phospho-beta-glucosidase ChbF. Catalyzes the removal of only one acetyl group from chitobiose-6-P to yield monoacetylchitobiose-6-P, the inducer of ChbR and the substrate of ChbF. The polypeptide is Chitooligosaccharide deacetylase (Escherichia coli O6:H1 (strain CFT073 / ATCC 700928 / UPEC)).